A 237-amino-acid polypeptide reads, in one-letter code: Uridylate kinase (237 aa).

12–15 is a binding site for ATP; the sequence is KISG. A UMP-binding site is contributed by Gly-54. ATP contacts are provided by Gly-55 and Arg-59. Residues Asp-72 and 133-140 each bind UMP; that span reads TGNPFFST. Tyr-166 and Asp-169 together coordinate ATP.

It belongs to the UMP kinase family. As to quaternary structure, homohexamer.

The protein resides in the cytoplasm. The catalysed reaction is UMP + ATP = UDP + ADP. The protein operates within pyrimidine metabolism; CTP biosynthesis via de novo pathway; UDP from UMP (UMPK route): step 1/1. Its activity is regulated as follows. Inhibited by UTP. Functionally, catalyzes the reversible phosphorylation of UMP to UDP. The chain is Uridylate kinase from Caldanaerobacter subterraneus subsp. tengcongensis (strain DSM 15242 / JCM 11007 / NBRC 100824 / MB4) (Thermoanaerobacter tengcongensis).